The chain runs to 178 residues: Extracellular fatty acid-binding protein (178 aa).

An N-terminal signal peptide occupies residues 1-20 (MRTLALSLALALLCLLHTEA). Residue Ala-21 is modified to Blocked amino end (Ala). Thr-43 is an enterobactin binding site. 1-tetradecanoyl-sn-glycerol 3-phosphate contacts are provided by Tyr-72 and Lys-104. Residues Cys-80 and Cys-173 are joined by a disulfide bond. Enterobactin-binding residues include Lys-104, Arg-123, and Arg-134. Position 134–136 (134–136 (RLY)) interacts with 1-tetradecanoyl-sn-glycerol 3-phosphate.

Belongs to the calycin superfamily. Lipocalin family. As to quaternary structure, monomer. In terms of processing, does not seem to be glycosylated. Expressed in egg white (at protein level). Expressed in the magnum of the oviduct (at protein level). Preferentially synthesized in nonproliferating cells.

It localises to the secreted. Its function is as follows. Siderocalin-like lipocalin tightly binding a variety of bacterial ferric siderophores, also binds long-chain unsaturated fatty acids such as linoleic acid, oleic acid, arachidonic acid and, with a lower affinity, long chain saturated fatty acids such as steraic acid. May act as an antibacterial factor, through dual ligand specificity, both as a siderophore-sequestrating molecule and a lysophosphatidic acid (LPA) sensor. The sequence is that of Extracellular fatty acid-binding protein (EXFABP) from Gallus gallus (Chicken).